Reading from the N-terminus, the 141-residue chain is Hemoglobin subunit alpha (141 aa).

In terms of domain architecture, Globin spans 1–141; the sequence is VLSAADKTHV…VSTVLVSKYR (141 aa). The residue at position 3 (S3) is a Phosphoserine. The residue at position 7 (K7) is an N6-succinyllysine. T8 carries the phosphothreonine modification. The residue at position 11 (K11) is an N6-succinyllysine. K16 bears the N6-acetyllysine; alternate mark. Residue K16 is modified to N6-succinyllysine; alternate. At S35 the chain carries Phosphoserine. K40 bears the N6-succinyllysine mark. Position 49 is a phosphoserine (S49). H58 lines the O2 pocket. H87 contacts heme b. S102 carries the phosphoserine modification. Position 108 is a phosphothreonine (T108). Residue S124 is modified to Phosphoserine. The residue at position 134 (T134) is a Phosphothreonine. Position 138 is a phosphoserine (S138).

It belongs to the globin family. Heterotetramer of two alpha chains and two beta chains. Red blood cells.

Functionally, involved in oxygen transport from the lung to the various peripheral tissues. Its function is as follows. Hemopressin acts as an antagonist peptide of the cannabinoid receptor CNR1. Hemopressin-binding efficiently blocks cannabinoid receptor CNR1 and subsequent signaling. The protein is Hemoglobin subunit alpha (HBA) of Dasypus novemcinctus (Nine-banded armadillo).